Here is a 310-residue protein sequence, read N- to C-terminus: Ribosomal RNA small subunit methyltransferase H (310 aa).

S-adenosyl-L-methionine contacts are provided by residues 32–34 (GGH), D52, F79, D100, and Q107.

Belongs to the methyltransferase superfamily. RsmH family.

Its subcellular location is the cytoplasm. It carries out the reaction cytidine(1402) in 16S rRNA + S-adenosyl-L-methionine = N(4)-methylcytidine(1402) in 16S rRNA + S-adenosyl-L-homocysteine + H(+). Its function is as follows. Specifically methylates the N4 position of cytidine in position 1402 (C1402) of 16S rRNA. This Bacillus cereus (strain G9842) protein is Ribosomal RNA small subunit methyltransferase H.